The chain runs to 159 residues: Endoribonuclease YbeY (159 aa).

3 residues coordinate Zn(2+): His123, His127, and His133.

The protein belongs to the endoribonuclease YbeY family. Requires Zn(2+) as cofactor.

It localises to the cytoplasm. Functionally, single strand-specific metallo-endoribonuclease involved in late-stage 70S ribosome quality control and in maturation of the 3' terminus of the 16S rRNA. The protein is Endoribonuclease YbeY of Bacillus pumilus (strain SAFR-032).